The chain runs to 588 residues: Adenine deaminase (588 aa).

Belongs to the metallo-dependent hydrolases superfamily. Adenine deaminase family. Homodimer. Mn(2+) is required as a cofactor.

The enzyme catalyses adenine + H2O + H(+) = hypoxanthine + NH4(+). The chain is Adenine deaminase from Escherichia fergusonii (strain ATCC 35469 / DSM 13698 / CCUG 18766 / IAM 14443 / JCM 21226 / LMG 7866 / NBRC 102419 / NCTC 12128 / CDC 0568-73).